A 740-amino-acid chain; its full sequence is Arf-GAP with coiled-coil, ANK repeat and PH domain-containing protein 1 (740 aa).

In terms of domain architecture, BAR spans 1–226; the sequence is MTVKLDFEEC…RKELGTQLHN (226 aa). The segment at 1–382 is required for formation of endosomal tubules when overexpressed with PIP5K1C; the sequence is MTVKLDFEEC…RGPGQVSGYH (382 aa). The PH domain maps to 265–360; that stretch reads GLVMEGHLFK…WVSAVQSSIA (96 aa). In terms of domain architecture, Arf-GAP spans 405-527; that stretch reads GQVAAQVQSV…KFLTKLPEIR (123 aa). The interval 405 to 740 is required for interaction with GULP1; that stretch reads GQVAAQVQSV…SRRSHDLHTL (336 aa). The C4-type zinc-finger motif lies at 420-443; that stretch reads CCDCREPAPEWASINLGVTLCIQC. At Y485 the chain carries 3'-nitrotyrosine. Residues 525-562 form a disordered region; sequence EIRGRRGGRGPPRGHPPVPPKPPIRPHSGIVRSKSECP. Positions 525 to 566 are prevents interaction with ITGB1 when S-554 is not phosphorylated; that stretch reads EIRGRRGGRGPPRGHPPVPPKPPIRPHSGIVRSKSECPSDDM. Positions 537–549 are enriched in pro residues; sequence RGHPPVPPKPPIR. 3 ANK repeats span residues 606 to 635, 639 to 668, and 672 to 702; these read GNAT…NVNQ, AGRG…DLGA, and EGRD…EAEA.

Banana-shaped homodimer laterally assembling into tetramers, the tetramers further pack helically onto the membrane. Interacts with GTP-bound ARF6. Interacts with third cytoplasmic loop of SLC2A4/GLUT4. Interacts with CLTC. Interacts with GULP1. Forms a complex with GDP-bound ARF6 and GULP1. Interacts with ITGB1; required for ITGB1 recycling.

Its subcellular location is the recycling endosome membrane. With respect to regulation, GAP activity stimulated by phosphatidylinositol 4,5-bisphosphate (PIP2) and phosphatidic acid. Functionally, GTPase-activating protein (GAP) for ADP ribosylation factor 6 (ARF6) required for clathrin-dependent export of proteins from recycling endosomes to trans-Golgi network and cell surface. Required for regulated export of ITGB1 from recycling endosomes to the cell surface and ITGB1-dependent cell migration. The chain is Arf-GAP with coiled-coil, ANK repeat and PH domain-containing protein 1 (Acap1) from Mus musculus (Mouse).